Consider the following 439-residue polypeptide: MNDALEIMKKQATLNIGTIGHVAHGKSTIVKAISGISTIKFKAELERNITIKLGYANAKIYKCDSKCVRPNCYQSFGSSSPDRLSCKKCGGTLKLVRHVSFVDCPGHDVLMATMLNGTAIMDAVLLLIAANEPCPQPQTTEHLFAVEIMDLKKVLVVQNKIDLVSREQALEQHDQIQKFLKTSNVSGPVIPTAAQIGVNIPALLDFIVNYIPEPVRDSTARPKMIVIRSFDVNRPGTRVCEMSGGVIGGSLVTGMLRVGDKIEIRPGLVIRKGNRFVCRPFVSEIVSLKAESIDLSEAYPGGLIGVGTTMDPSFCKADKLVGQVMGKLGFLPSIFHKITVEYSLFPKTTIQGSSKLKEGEHVLLNIGSTTTGSVIGRINETSGEFDLVKPACCEIGERIAISRKINNHWRLIGHGEIKDGTCIEPEYDAEIDDAQRKAD.

Residues 11 to 215 (QATLNIGTIG…FIVNYIPEPV (205 aa)) enclose the tr-type G domain. Positions 20–27 (GHVAHGKS) are G1. Residue 23–28 (AHGKST) participates in GTP binding. The interval 48 to 52 (NITIK) is G2. The interval 103 to 106 (DCPG) is G3. GTP-binding positions include 159–162 (NKID) and 193–195 (AAQ). The G4 stretch occupies residues 159 to 162 (NKID). A G5 region spans residues 193-195 (AAQ). An interacts with CDC123 region spans residues 415-427 (GEIKDGTCIEPEY).

This sequence belongs to the TRAFAC class translation factor GTPase superfamily. Classic translation factor GTPase family. EIF2G subfamily. As to quaternary structure, eukaryotic translation initiation factor 2 eIF2 is a heterotrimeric complex composed of an alpha, a beta and a gamma subunit. The factors eIF-1, eIF-2, eIF-3, TIF5/eIF-5 and methionyl-tRNAi form a multifactor complex (MFC) that may bind to the 40S ribosome.

Its subcellular location is the cytoplasm. It localises to the cytosol. The catalysed reaction is GTP + H2O = GDP + phosphate + H(+). Its function is as follows. As a subunit of eukaryotic initiation factor 2 eIF2, involved in the early steps of protein synthesis. In the presence of GTP, eIF-2 forms a ternary complex with initiator tRNA Met-tRNAi and then recruits the 40S ribosomal complex and initiation factors eIF-1, eIF-1A and eIF-3 to form the 43S pre-initiation complex (43S PIC), a step that determines the rate of protein translation. The 43S PIC binds to mRNA and scans downstream to the initiation codon, where it forms a 48S initiation complex by codon-anticodon base pairing. This leads to the displacement of eIF-1 to allow GTPase-activating protein (GAP) eIF-5-mediated hydrolysis of eIF2-bound GTP. Hydrolysis of GTP and release of Pi, which makes GTP hydrolysis irreversible, causes the release of the eIF-2-GDP binary complex from the 40S subunit, an event that is essential for the subsequent joining of the 60S ribosomal subunit to form an elongation-competent 80S ribosome. In order for eIF-2 to recycle and catalyze another round of initiation, the GDP bound to eIF-2 must be exchanged with GTP by way of a reaction catalyzed by GDP-GTP exchange factor (GEF) eIF-2B. This Encephalitozoon cuniculi (strain GB-M1) (Microsporidian parasite) protein is Eukaryotic translation initiation factor 2 subunit gamma.